Consider the following 289-residue polypeptide: Polyisoprenoid diphosphate/phosphate phosphohydrolase PLPP6 (289 aa).

Residues 1–81 (MQSPRRNAEG…SSQALPPQLP (81 aa)) form a disordered region. Residues 1–126 (MQSPRRNAEG…ESSSWGSMRP (126 aa)) are Cytoplasmic-facing. A phosphoserine mark is found at Ser-23, Ser-30, and Ser-64. A helical membrane pass occupies residues 127–147 (LMKLLEISGHGIPWLLGTLYC). Over 148 to 158 (LSRSDSWAGRE) the chain is Lumenal. Residues 159-179 (VLMNLLFALLLDLLLVSLIKG) form a helical membrane-spanning segment. Positions 178–186 (KGLVRRRRP) are phosphatase sequence motif I. Residues 180 to 222 (LVRRRRPAHNQMDMFFTISVDKYSFPSGHTTRAALVSRFILNH) are Cytoplasmic-facing. A phosphatase sequence motif II region spans residues 205–208 (PSGH). Residue His-208 is the Proton donors of the active site. The chain crosses the membrane as a helical span at residues 223-243 (LVLAIPLRVLVVLWAFILGLS). Residues 243–254 (SRVMLGRHNVTD) form a phosphatase sequence motif III region. Over 244–254 (RVMLGRHNVTD) the chain is Lumenal. His-250 (nucleophile) is an active-site residue. A helical transmembrane segment spans residues 255-275 (VAFGFFLGYMQYSIVDYCWLS). Residues 276 to 289 (PRTAPVLFVLWNQP) lie on the Cytoplasmic side of the membrane.

It belongs to the PA-phosphatase related phosphoesterase family. In terms of processing, phosphorylation by PKC activates the phosphatase activity towards presqualene diphosphate.

Its subcellular location is the endoplasmic reticulum membrane. The protein resides in the nucleus envelope. It is found in the nucleus inner membrane. It carries out the reaction presqualene diphosphate + H2O = presqualene phosphate + phosphate + H(+). It catalyses the reaction presqualene phosphate + H2O = presqualene alcohol + phosphate. The catalysed reaction is (2E,6E)-farnesyl diphosphate + H2O = (2E,6E)-farnesyl phosphate + phosphate + H(+). The enzyme catalyses (2E,6E)-farnesyl phosphate + H2O = (2E,6E)-farnesol + phosphate. It carries out the reaction (2E,6E,10E)-geranylgeranyl diphosphate + H2O = (2E,6E,10E)-geranylgeranyl phosphate + phosphate + H(+). It catalyses the reaction (2E,6E,10E)-geranylgeranyl phosphate + H2O = (2E,6E,10E)-geranylgeraniol + phosphate. The catalysed reaction is (2E)-geranyl diphosphate + H2O = (2E)-geranyl phosphate + phosphate + H(+). The enzyme catalyses (2E)-geranyl phosphate + H2O = (2E)-geraniol + phosphate. It carries out the reaction 1,2-dihexadecanoyl-sn-glycero-3-phosphate + H2O = 1,2-dihexadecanoyl-sn-glycerol + phosphate. Functionally, magnesium-independent polyisoprenoid diphosphatase that catalyzes the sequential dephosphorylation of presqualene, farnesyl, geranyl and geranylgeranyl diphosphates. Functions in the innate immune response through the dephosphorylation of presqualene diphosphate which acts as a potent inhibitor of the signaling pathways contributing to polymorphonuclear neutrophils activation. May regulate the biosynthesis of cholesterol and related sterols by dephosphorylating presqualene and farnesyl diphosphate, two key intermediates in this biosynthetic pathway. May also play a role in protein prenylation by acting on farnesyl diphosphate and its derivative geranylgeranyl diphosphate, two precursors for the addition of isoprenoid anchors to membrane proteins. Has a lower activity towards phosphatidic acid (PA), but through phosphatidic acid dephosphorylation may participate in the biosynthesis of phospholipids and triacylglycerols. May also act on ceramide-1-P, lysophosphatidic acid (LPA) and sphing-4-enine 1-phosphate/sphingosine-1-phosphate. The protein is Polyisoprenoid diphosphate/phosphate phosphohydrolase PLPP6 of Bos taurus (Bovine).